A 392-amino-acid polypeptide reads, in one-letter code: ATP phosphoribosyltransferase regulatory subunit (392 aa).

Belongs to the class-II aminoacyl-tRNA synthetase family. HisZ subfamily. As to quaternary structure, heteromultimer composed of HisG and HisZ subunits.

Its subcellular location is the cytoplasm. The protein operates within amino-acid biosynthesis; L-histidine biosynthesis; L-histidine from 5-phospho-alpha-D-ribose 1-diphosphate: step 1/9. Functionally, required for the first step of histidine biosynthesis. May allow the feedback regulation of ATP phosphoribosyltransferase activity by histidine. The protein is ATP phosphoribosyltransferase regulatory subunit of Prochlorococcus marinus (strain MIT 9313).